A 336-amino-acid polypeptide reads, in one-letter code: Probable carboxylesterase 6 (336 aa).

The interval 1-20 is disordered; sequence MGGTKLTHVTTTNPNNSNIH. A compositionally biased stretch (polar residues) spans 7–19; the sequence is THVTTTNPNNSNI. Positions 96 to 98 match the Involved in the stabilization of the negatively charged intermediate by the formation of the oxyanion hole motif; the sequence is HGG. Residues S176, D276, and H303 contribute to the active site.

This sequence belongs to the 'GDXG' lipolytic enzyme family. In terms of tissue distribution, expressed in roots, leaves, flowers and siliques.

It carries out the reaction a carboxylic ester + H2O = an alcohol + a carboxylate + H(+). Carboxylesterase acting on esters with varying acyl chain length. This Arabidopsis thaliana (Mouse-ear cress) protein is Probable carboxylesterase 6 (CXE6).